Here is a 249-residue protein sequence, read N- to C-terminus: Proteasome activator complex subunit 1 (249 aa).

Residues 60–101 (PLDIPVPDPVKEKEKGERKKQQEKEDKDEKKKGEDEDKGPPC) are disordered. The span at 68-98 (PVKEKEKGERKKQQEKEDKDEKKKGEDEDKG) shows a compositional bias: basic and acidic residues.

The protein belongs to the PA28 family. As to quaternary structure, heterodimer of PSME1 and PSME2, which forms a hexameric ring. PSME1 can form homoheptamers.

Its function is as follows. Implicated in immunoproteasome assembly and required for efficient antigen processing. The PA28 activator complex enhances the generation of class I binding peptides by altering the cleavage pattern of the proteasome. This chain is Proteasome activator complex subunit 1 (PSME1), found in Macaca fascicularis (Crab-eating macaque).